Consider the following 123-residue polypeptide: Ig heavy chain V region HPCG13 (123 aa).

One can recognise an Ig-like domain in the interval 1–114 (EVKLVESGGG…GSYWYFDVWG (114 aa)).

This is Ig heavy chain V region HPCG13 from Mus musculus (Mouse).